We begin with the raw amino-acid sequence, 570 residues long: Proline--tRNA ligase (570 aa).

The protein belongs to the class-II aminoacyl-tRNA synthetase family. ProS type 1 subfamily. In terms of assembly, homodimer.

The protein localises to the cytoplasm. It carries out the reaction tRNA(Pro) + L-proline + ATP = L-prolyl-tRNA(Pro) + AMP + diphosphate. Its function is as follows. Catalyzes the attachment of proline to tRNA(Pro) in a two-step reaction: proline is first activated by ATP to form Pro-AMP and then transferred to the acceptor end of tRNA(Pro). As ProRS can inadvertently accommodate and process non-cognate amino acids such as alanine and cysteine, to avoid such errors it has two additional distinct editing activities against alanine. One activity is designated as 'pretransfer' editing and involves the tRNA(Pro)-independent hydrolysis of activated Ala-AMP. The other activity is designated 'posttransfer' editing and involves deacylation of mischarged Ala-tRNA(Pro). The misacylated Cys-tRNA(Pro) is not edited by ProRS. The polypeptide is Proline--tRNA ligase (Clostridium tetani (strain Massachusetts / E88)).